The sequence spans 21 residues: Fibrinogen beta chain (21 aa).

Glutamine 1 carries the post-translational modification Pyrrolidone carboxylic acid. Position 6 is a sulfotyrosine (tyrosine 6).

In terms of assembly, heterohexamer; disulfide linked. Contains 2 sets of 3 non-identical chains (alpha, beta and gamma). The 2 heterotrimers are in head to head conformation with the N-termini in a small central domain. Post-translationally, conversion of fibrinogen to fibrin is triggered by thrombin, which cleaves fibrinopeptides A and B from alpha and beta chains, and thus exposes the N-terminal polymerization sites responsible for the formation of the soft clot.

Its subcellular location is the secreted. Its function is as follows. Cleaved by the protease thrombin to yield monomers which, together with fibrinogen alpha (FGA) and fibrinogen gamma (FGG), polymerize to form an insoluble fibrin matrix. Fibrin has a major function in hemostasis as one of the primary components of blood clots. In addition, functions during the early stages of wound repair to stabilize the lesion and guide cell migration during re-epithelialization. Was originally thought to be essential for platelet aggregation, based on in vitro studies using anticoagulated blood. However subsequent studies have shown that it is not absolutely required for thrombus formation in vivo. Enhances expression of SELP in activated platelets. Maternal fibrinogen is essential for successful pregnancy. Fibrin deposition is also associated with infection, where it protects against IFNG-mediated hemorrhage. May also facilitate the antibacterial immune response via both innate and T-cell mediated pathways. This chain is Fibrinogen beta chain (FGB), found in Rangifer tarandus (Reindeer).